The sequence spans 191 residues: Protein GrpE (191 aa).

2 stretches are compositionally biased toward basic and acidic residues: residues 1–19 and 29–42; these read MKDE…EPES and QQGE…EKEC. Positions 1-42 are disordered; sequence MKDEHNQEHDHLSQKEPESYQKACACKEQQGEEKQEASEKEC.

This sequence belongs to the GrpE family. As to quaternary structure, homodimer.

It is found in the cytoplasm. In terms of biological role, participates actively in the response to hyperosmotic and heat shock by preventing the aggregation of stress-denatured proteins, in association with DnaK and GrpE. It is the nucleotide exchange factor for DnaK and may function as a thermosensor. Unfolded proteins bind initially to DnaJ; upon interaction with the DnaJ-bound protein, DnaK hydrolyzes its bound ATP, resulting in the formation of a stable complex. GrpE releases ADP from DnaK; ATP binding to DnaK triggers the release of the substrate protein, thus completing the reaction cycle. Several rounds of ATP-dependent interactions between DnaJ, DnaK and GrpE are required for fully efficient folding. This chain is Protein GrpE, found in Helicobacter pylori (strain HPAG1).